The following is a 231-amino-acid chain: Ribonuclease 3 (231 aa).

The 129-residue stretch at 7–135 (IQAIESKLNF…ILGAVYLDGG (129 aa)) folds into the RNase III domain. Glutamate 48 lines the Mg(2+) pocket. Aspartate 52 is a catalytic residue. Mg(2+)-binding residues include asparagine 121 and glutamate 124. The active site involves glutamate 124. A DRBM domain is found at 160-229 (NPKNRLQQFT…AKQALSTHDN (70 aa)).

It belongs to the ribonuclease III family. In terms of assembly, homodimer. Mg(2+) serves as cofactor.

It localises to the cytoplasm. It catalyses the reaction Endonucleolytic cleavage to 5'-phosphomonoester.. Its function is as follows. Digests double-stranded RNA. Involved in the processing of primary rRNA transcript to yield the immediate precursors to the large and small rRNAs (23S and 16S). Processes some mRNAs, and tRNAs when they are encoded in the rRNA operon. Processes pre-crRNA and tracrRNA of type II CRISPR loci if present in the organism. This Chlamydia trachomatis serovar L2 (strain ATCC VR-902B / DSM 19102 / 434/Bu) protein is Ribonuclease 3.